A 319-amino-acid chain; its full sequence is Ribonucleoside-diphosphate reductase 2 subunit beta (319 aa).

Fe cation contacts are provided by Asp67, Glu98, and His101. The active site involves Tyr105. Residues Glu158, Glu192, and His195 each contribute to the Fe cation site.

The protein belongs to the ribonucleoside diphosphate reductase small chain family. Tetramer of two alpha and two beta subunits. Requires Fe cation as cofactor.

The enzyme catalyses a 2'-deoxyribonucleoside 5'-diphosphate + [thioredoxin]-disulfide + H2O = a ribonucleoside 5'-diphosphate + [thioredoxin]-dithiol. Its function is as follows. Provides the precursors necessary for DNA synthesis. Catalyzes the biosynthesis of deoxyribonucleotides from the corresponding ribonucleotides. R2F contains the tyrosyl radical required for catalysis. The polypeptide is Ribonucleoside-diphosphate reductase 2 subunit beta (nrdF) (Salmonella typhimurium (strain LT2 / SGSC1412 / ATCC 700720)).